A 696-amino-acid chain; its full sequence is Polyribonucleotide nucleotidyltransferase (696 aa).

Mg(2+) contacts are provided by aspartate 483 and aspartate 489. A KH domain is found at 550-609; sequence PRITTIYVKTDKIRDVIGSGGKNIRGITEATGVTIDIDDTGKINIASTDKAACDLAIKMI. Residues 619-687 enclose the S1 motif domain; the sequence is GKLYMGLVKK…KQGKIKLSRK (69 aa).

The protein belongs to the polyribonucleotide nucleotidyltransferase family. Requires Mg(2+) as cofactor.

The protein resides in the cytoplasm. It carries out the reaction RNA(n+1) + phosphate = RNA(n) + a ribonucleoside 5'-diphosphate. Involved in mRNA degradation. Catalyzes the phosphorolysis of single-stranded polyribonucleotides processively in the 3'- to 5'-direction. The sequence is that of Polyribonucleotide nucleotidyltransferase from Geotalea uraniireducens (strain Rf4) (Geobacter uraniireducens).